Consider the following 119-residue polypeptide: Ribosome-binding factor A (119 aa).

Belongs to the RbfA family. Monomer. Binds 30S ribosomal subunits, but not 50S ribosomal subunits or 70S ribosomes.

The protein resides in the cytoplasm. Functionally, one of several proteins that assist in the late maturation steps of the functional core of the 30S ribosomal subunit. Associates with free 30S ribosomal subunits (but not with 30S subunits that are part of 70S ribosomes or polysomes). Required for efficient processing of 16S rRNA. May interact with the 5'-terminal helix region of 16S rRNA. The sequence is that of Ribosome-binding factor A from Limosilactobacillus reuteri (strain DSM 20016) (Lactobacillus reuteri).